The primary structure comprises 232 residues: Urease accessory protein UreF (232 aa).

It belongs to the UreF family. UreD, UreF and UreG form a complex that acts as a GTP-hydrolysis-dependent molecular chaperone, activating the urease apoprotein by helping to assemble the nickel containing metallocenter of UreC. The UreE protein probably delivers the nickel.

It localises to the cytoplasm. Its function is as follows. Required for maturation of urease via the functional incorporation of the urease nickel metallocenter. This chain is Urease accessory protein UreF, found in Azorhizobium caulinodans (strain ATCC 43989 / DSM 5975 / JCM 20966 / LMG 6465 / NBRC 14845 / NCIMB 13405 / ORS 571).